An 803-amino-acid polypeptide reads, in one-letter code: Phenylalanine--tRNA ligase beta subunit (803 aa).

Positions S40–Y150 constitute a tRNA-binding domain. Positions P405–K480 constitute a B5 domain. D458 and E468 together coordinate Mg(2+). The region spanning S710–R803 is the FDX-ACB domain.

It belongs to the phenylalanyl-tRNA synthetase beta subunit family. Type 1 subfamily. Tetramer of two alpha and two beta subunits. It depends on Mg(2+) as a cofactor.

The protein resides in the cytoplasm. The catalysed reaction is tRNA(Phe) + L-phenylalanine + ATP = L-phenylalanyl-tRNA(Phe) + AMP + diphosphate + H(+). This Blochmanniella floridana protein is Phenylalanine--tRNA ligase beta subunit.